The primary structure comprises 145 residues: NADH dehydrogenase [ubiquinone] 1 alpha subcomplex subunit 12 (145 aa).

At methionine 1 the chain carries N-acetylmethionine.

Belongs to the complex I NDUFA12 subunit family. As to quaternary structure, complex I is composed of 45 different subunits.

The protein localises to the mitochondrion inner membrane. Functionally, accessory subunit of the mitochondrial membrane respiratory chain NADH dehydrogenase (Complex I), that is believed not to be involved in catalysis. Complex I functions in the transfer of electrons from NADH to the respiratory chain. The immediate electron acceptor for the enzyme is believed to be ubiquinone. This chain is NADH dehydrogenase [ubiquinone] 1 alpha subcomplex subunit 12 (NDUFA12), found in Bos taurus (Bovine).